We begin with the raw amino-acid sequence, 458 residues long: tRNA-2-methylthio-N(6)-dimethylallyladenosine synthase (458 aa).

The MTTase N-terminal domain maps to 15–134 (KKVFIKTYGC…LPDLLEQTKQ (120 aa)). Residues cysteine 24, cysteine 60, cysteine 97, cysteine 175, cysteine 179, and cysteine 182 each coordinate [4Fe-4S] cluster. The Radical SAM core domain maps to 161 to 393 (RKRGVSAFLT…QVLLLEQQNA (233 aa)). The 62-residue stretch at 396–457 (RSKIGQTTDV…SNSFVGEMTN (62 aa)) folds into the TRAM domain.

This sequence belongs to the methylthiotransferase family. MiaB subfamily. Monomer. It depends on [4Fe-4S] cluster as a cofactor.

It is found in the cytoplasm. The catalysed reaction is N(6)-dimethylallyladenosine(37) in tRNA + (sulfur carrier)-SH + AH2 + 2 S-adenosyl-L-methionine = 2-methylsulfanyl-N(6)-dimethylallyladenosine(37) in tRNA + (sulfur carrier)-H + 5'-deoxyadenosine + L-methionine + A + S-adenosyl-L-homocysteine + 2 H(+). Catalyzes the methylthiolation of N6-(dimethylallyl)adenosine (i(6)A), leading to the formation of 2-methylthio-N6-(dimethylallyl)adenosine (ms(2)i(6)A) at position 37 in tRNAs that read codons beginning with uridine. The sequence is that of tRNA-2-methylthio-N(6)-dimethylallyladenosine synthase from Bartonella henselae (strain ATCC 49882 / DSM 28221 / CCUG 30454 / Houston 1) (Rochalimaea henselae).